The primary structure comprises 224 residues: Uridylate kinase (224 aa).

8–12 contributes to the ATP binding site; it reads KITGK. Glycine 43 is a binding site for UMP. Residues glycine 44 and arginine 48 each contribute to the ATP site. UMP is bound by residues aspartate 66 and 114-120; that span reads LIPGQST. 3 residues coordinate ATP: serine 140, tyrosine 146, and aspartate 149.

It belongs to the UMP kinase family. In terms of assembly, homohexamer.

The protein localises to the cytoplasm. It catalyses the reaction UMP + ATP = UDP + ADP. It participates in pyrimidine metabolism; CTP biosynthesis via de novo pathway; UDP from UMP (UMPK route): step 1/1. Inhibited by UTP. In terms of biological role, catalyzes the reversible phosphorylation of UMP to UDP. This is Uridylate kinase from Staphylothermus marinus (strain ATCC 43588 / DSM 3639 / JCM 9404 / F1).